A 506-amino-acid chain; its full sequence is Maturase K (506 aa).

This sequence belongs to the intron maturase 2 family. MatK subfamily.

It is found in the plastid. It localises to the chloroplast. Usually encoded in the trnK tRNA gene intron. Probably assists in splicing its own and other chloroplast group II introns. The polypeptide is Maturase K (Styphnolobium japonicum (Japanese pagoda tree)).